A 162-amino-acid polypeptide reads, in one-letter code: MRILKPYLRSTSIQCYLCLLLNSHFLTEAGIHVFILGCISAGLPKTEANWQSVIHDLKTIEHLIQSMHMDATLYTESDAHPNCKVTALQCFLLELRVILHESKNAAIYEIIENLTMLADRNLSSIENKTELGCKECEELEKKSIKEFLKSFVHIVQMFINTS.

A signal peptide spans 1 to 29; that stretch reads MRILKPYLRSTSIQCYLCLLLNSHFLTEA. A propeptide spanning residues 30–48 is cleaved from the precursor; the sequence is GIHVFILGCISAGLPKTEA. Disulfide bonds link C83/C133 and C90/C136. Residues N113, N121, and N127 are each glycosylated (N-linked (GlcNAc...) asparagine).

This sequence belongs to the IL-15/IL-21 family.

The protein localises to the secreted. Cytokine that plays a major role in the development of inflammatory and protective immune responses to microbial invaders and parasites by modulating immune cells of both the innate and adaptive immune systems. Stimulates the proliferation of natural killer cells, T-cells and B-cells and promotes the secretion of several cytokines. In monocytes, induces the production of IL8 and monocyte chemotactic protein 1/CCL2, two chemokines that attract neutrophils and monocytes respectively to sites of infection. Unlike most cytokines, which are secreted in soluble form, IL15 is expressed in association with its high affinity IL15RA on the surface of IL15-producing cells and delivers signals to target cells that express IL2RB and IL2RG receptor subunits. Binding to its receptor triggers the phosphorylation of JAK1 and JAK3 and the recruitment and subsequent phosphorylation of signal transducer and activator of transcription-3/STAT3 and STAT5. In mast cells, induces the rapid tyrosine phosphorylation of STAT6 and thereby controls mast cell survival and release of cytokines such as IL4. This is Interleukin-15 (IL15) from Ovis aries (Sheep).